A 94-amino-acid polypeptide reads, in one-letter code: Large ribosomal subunit protein bL27 (94 aa).

Positions 1–9 (MLKLNLQFF) are excised as a propeptide.

It belongs to the bacterial ribosomal protein bL27 family. In terms of processing, the N-terminus is cleaved by ribosomal processing cysteine protease Prp.

The polypeptide is Large ribosomal subunit protein bL27 (Staphylococcus aureus (strain Mu3 / ATCC 700698)).